The chain runs to 663 residues: Zinc finger protein 44 (663 aa).

The 87-residue stretch at 52-138 (VAFEDVAVNF…GETLSQIRNS (87 aa)) folds into the KRAB domain. Residues 189 to 211 (YTHKQCGKGLSYRHSFQTCERPH) form a C2H2-type 1; atypical zinc finger. A C2H2-type 2; degenerate zinc finger spans residues 217–239 (YDCKECGKTFSSPGNLRRHMVVK). C2H2-type zinc fingers lie at residues 245-267 (YKCE…ERTH), 273-295 (YECK…EKIH), 301-323 (YECK…ERTH), 329-351 (YKCK…ERIH), 357-379 (YTCK…MIMH), 385-407 (HKCK…EGTH), 413-435 (YECK…MMAH), 441-463 (HKCT…ERTH), 469-491 (YECK…ETTH), 497-518 (YKCK…ETTH), 524-546 (YECK…ERTH), 552-574 (YECQ…ERTH), 580-602 (YECK…ERTH), 608-630 (YECK…ERTH), and 636-658 (YECK…KRTH).

This sequence belongs to the krueppel C2H2-type zinc-finger protein family.

The protein resides in the nucleus. Its function is as follows. May be involved in transcriptional regulation. This chain is Zinc finger protein 44 (ZNF44), found in Homo sapiens (Human).